We begin with the raw amino-acid sequence, 306 residues long: D-alanine--D-alanine ligase (306 aa).

Residues 107 to 300 (KAAYRTAGLP…FGQLCAWLVE (194 aa)) enclose the ATP-grasp domain. 134–184 (IAPPYVVKPNNEGSSVGIYIVHEATNSPPQLSEEMPAQVMVEAYAPGREMT) serves as a coordination point for ATP. The Mg(2+) site is built by Asp251, Glu267, and Asn269.

It belongs to the D-alanine--D-alanine ligase family. It depends on Mg(2+) as a cofactor. Mn(2+) serves as cofactor.

It localises to the cytoplasm. The enzyme catalyses 2 D-alanine + ATP = D-alanyl-D-alanine + ADP + phosphate + H(+). It functions in the pathway cell wall biogenesis; peptidoglycan biosynthesis. Its function is as follows. Cell wall formation. The polypeptide is D-alanine--D-alanine ligase (Ruegeria sp. (strain TM1040) (Silicibacter sp.)).